We begin with the raw amino-acid sequence, 437 residues long: O-methyltransferase 10 (437 aa).

Glycine 259, glutamate 282, asparagine 315, and methionine 316 together coordinate S-adenosyl-L-methionine. Catalysis depends on histidine 335, which acts as the Proton acceptor.

This sequence belongs to the class I-like SAM-binding methyltransferase superfamily. Cation-independent O-methyltransferase family. COMT subfamily.

The enzyme catalyses (3,5-dichloro-2,4,6-trihydroxyphenyl)hexan-1-one + S-adenosyl-L-methionine = 1-(3,5-dichloro-2,6-dihydroxy-4-methoxyphenyl)hexan-1-one + S-adenosyl-L-homocysteine + H(+). This chain is O-methyltransferase 10 (omt10), found in Dictyostelium discoideum (Social amoeba).